Consider the following 635-residue polypeptide: tRNA 5-methylaminomethyl-2-thiouridine biosynthesis bifunctional protein MnmC (635 aa).

Positions 1-227 (MSEPIDWLPD…KRSNLQAEFD (227 aa)) are tRNA (mnm(5)s(2)U34)-methyltransferase. The interval 254-635 (IGGGLSGAAV…ALSTERLPAD (382 aa)) is FAD-dependent cmnm(5)s(2)U34 oxidoreductase.

The protein in the N-terminal section; belongs to the methyltransferase superfamily. tRNA (mnm(5)s(2)U34)-methyltransferase family. It in the C-terminal section; belongs to the DAO family. FAD serves as cofactor.

Its subcellular location is the cytoplasm. It catalyses the reaction 5-aminomethyl-2-thiouridine(34) in tRNA + S-adenosyl-L-methionine = 5-methylaminomethyl-2-thiouridine(34) in tRNA + S-adenosyl-L-homocysteine + H(+). Catalyzes the last two steps in the biosynthesis of 5-methylaminomethyl-2-thiouridine (mnm(5)s(2)U) at the wobble position (U34) in tRNA. Catalyzes the FAD-dependent demodification of cmnm(5)s(2)U34 to nm(5)s(2)U34, followed by the transfer of a methyl group from S-adenosyl-L-methionine to nm(5)s(2)U34, to form mnm(5)s(2)U34. The sequence is that of tRNA 5-methylaminomethyl-2-thiouridine biosynthesis bifunctional protein MnmC from Paracidovorax citrulli (strain AAC00-1) (Acidovorax citrulli).